The primary structure comprises 424 residues: Cysteate synthase (424 aa).

Lysine 106 carries the N6-(pyridoxal phosphate)lysine modification. Pyridoxal 5'-phosphate contacts are provided by asparagine 132 and threonine 381.

This sequence belongs to the threonine synthase family. Cysteate synthase subfamily. Homotrimer. Pyridoxal 5'-phosphate serves as cofactor.

The enzyme catalyses O-phospho-L-serine + sulfite + H(+) = L-cysteate + phosphate. The protein operates within cofactor biosynthesis; coenzyme M biosynthesis. In terms of biological role, specifically catalyzes the beta-elimination of phosphate from L-phosphoserine and the beta-addition of sulfite to the dehydroalanine intermediate to produce L-cysteate. The sequence is that of Cysteate synthase from Methanoregula boonei (strain DSM 21154 / JCM 14090 / 6A8).